The primary structure comprises 92 residues: Small ribosomal subunit protein uS15c (92 aa).

Belongs to the universal ribosomal protein uS15 family. In terms of assembly, part of the 30S ribosomal subunit.

Its subcellular location is the plastid. The protein localises to the chloroplast. This Carica papaya (Papaya) protein is Small ribosomal subunit protein uS15c (rps15).